The sequence spans 156 residues: Small ribosomal subunit protein uS7 (156 aa).

Belongs to the universal ribosomal protein uS7 family. As to quaternary structure, part of the 30S ribosomal subunit. Contacts proteins S9 and S11.

In terms of biological role, one of the primary rRNA binding proteins, it binds directly to 16S rRNA where it nucleates assembly of the head domain of the 30S subunit. Is located at the subunit interface close to the decoding center, probably blocks exit of the E-site tRNA. The protein is Small ribosomal subunit protein uS7 of Chromohalobacter salexigens (strain ATCC BAA-138 / DSM 3043 / CIP 106854 / NCIMB 13768 / 1H11).